Consider the following 173-residue polypeptide: Mesencephalic astrocyte-derived neurotrophic factor homolog (173 aa).

Positions 1–22 (MKTWHMVVVIGFLATLAQTSLA) are cleaved as a signal peptide. Cystine bridges form between Cys28–Cys114, Cys31–Cys103, Cys61–Cys72, and Cys148–Cys151.

This sequence belongs to the ARMET family.

The protein resides in the secreted. In terms of biological role, required during the maturation of the embryonic nervous system for maintenance of neuronal and cuticular connectivity. Essential for maintenance of dopaminergic neurons and dopamine levels. The polypeptide is Mesencephalic astrocyte-derived neurotrophic factor homolog (Drosophila sechellia (Fruit fly)).